A 223-amino-acid chain; its full sequence is GRF1-interacting factor 3 (223 aa).

The interval 179–223 is disordered; sequence ANNAGPNDASGGGKPDGTNMSQSGADGQGGSAARHGGGDAKTEGK. Over residues 214–223 the composition is skewed to basic and acidic residues; the sequence is GGGDAKTEGK.

The protein belongs to the SS18 family. As to quaternary structure, interacts with GRF1. Predominantly expressed in shoot tips containing the shoot apical meristem (SAM) and flower buds. Also expressed in mature flowers.

Functionally, transcription coactivator that plays a role in the regulation of cell expansion in leaf and cotyledons tissues. Component of a network formed by miR396, the GRFs and their interacting factors (GIFs) acting in the regulation of meristem function, at least partially through the control of cell proliferation. GIFs are involved in the positive regulation of cell proliferation of lateral organs in a functionally redundant manner. This Arabidopsis thaliana (Mouse-ear cress) protein is GRF1-interacting factor 3 (GIF3).